Reading from the N-terminus, the 619-residue chain is Thiohydroximate-O-sulfate sulfur/sulfate-lyase (nitrile-forming) NSP4 (619 aa).

Jacalin-type lectin domains are found at residues 2 to 142 (AQKV…YFAP) and 151 to 292 (AKKL…YISL). 5 Kelch repeats span residues 326 to 374 (KIYS…VCMV), 379 to 425 (TLYV…SMAA), 429 to 478 (NVYV…VVQG), 480 to 524 (VWVV…ASAA), and 528 to 583 (HIVI…GWTA). The active-site Proton donor is the Arg386. Arg386, Ser419, Arg441, Gly470, and Val519 together coordinate a (Z)-N-(sulfonatooxy)alkanimidothioate. Catalysis depends on Arg441, which acts as the Proton donor. Fe(2+)-binding residues include Glu535, Asp539, and His543. Residue Trp581 coordinates a (Z)-N-(sulfonatooxy)alkanimidothioate.

The protein belongs to the jacalin lectin family. Requires Fe(2+) as cofactor. In terms of tissue distribution, mainly expressed in roots, and, to a lower extent, in seedlings and leaves. Observed in seeds.

The catalysed reaction is a (Z)-N-(sulfonatooxy)alkanimidothioate = a nitrile + sulfur + sulfate. The enzyme catalyses (Z)-phenyl-N-(sulfonatooxy)methanimidothioate = phenylacetonitrile + sulfur + sulfate. It carries out the reaction (Z)-N-(sulfonatooxy)prop-2-enimidothioate = but-3-enenitrile + sulfur + sulfate. Specifier protein that contributes to constitutive and herbivore-induced simple nitrile formation. Promotes simple nitriles, but not epithionitrile or thiocyanate formation. Converts allylglucosinolate and benzylglucosinolate (glucotropaeolin) to their corresponding simple nitriles in the presence of myrosinase. In Arabidopsis thaliana (Mouse-ear cress), this protein is Thiohydroximate-O-sulfate sulfur/sulfate-lyase (nitrile-forming) NSP4.